Consider the following 317-residue polypeptide: 4-hydroxy-3-methylbut-2-enyl diphosphate reductase (317 aa).

C12 lines the [4Fe-4S] cluster pocket. H41 and H74 together coordinate (2E)-4-hydroxy-3-methylbut-2-enyl diphosphate. H41 and H74 together coordinate dimethylallyl diphosphate. Isopentenyl diphosphate contacts are provided by H41 and H74. Position 96 (C96) interacts with [4Fe-4S] cluster. H124 is a binding site for (2E)-4-hydroxy-3-methylbut-2-enyl diphosphate. H124 lines the dimethylallyl diphosphate pocket. H124 contacts isopentenyl diphosphate. E126 serves as the catalytic Proton donor. Residue T168 participates in (2E)-4-hydroxy-3-methylbut-2-enyl diphosphate binding. C198 serves as a coordination point for [4Fe-4S] cluster. (2E)-4-hydroxy-3-methylbut-2-enyl diphosphate is bound by residues S226, S227, N228, and S270. Residues S226, S227, N228, and S270 each contribute to the dimethylallyl diphosphate site. Residues S226, S227, N228, and S270 each contribute to the isopentenyl diphosphate site.

Belongs to the IspH family. [4Fe-4S] cluster serves as cofactor.

The enzyme catalyses isopentenyl diphosphate + 2 oxidized [2Fe-2S]-[ferredoxin] + H2O = (2E)-4-hydroxy-3-methylbut-2-enyl diphosphate + 2 reduced [2Fe-2S]-[ferredoxin] + 2 H(+). The catalysed reaction is dimethylallyl diphosphate + 2 oxidized [2Fe-2S]-[ferredoxin] + H2O = (2E)-4-hydroxy-3-methylbut-2-enyl diphosphate + 2 reduced [2Fe-2S]-[ferredoxin] + 2 H(+). It participates in isoprenoid biosynthesis; dimethylallyl diphosphate biosynthesis; dimethylallyl diphosphate from (2E)-4-hydroxy-3-methylbutenyl diphosphate: step 1/1. Its pathway is isoprenoid biosynthesis; isopentenyl diphosphate biosynthesis via DXP pathway; isopentenyl diphosphate from 1-deoxy-D-xylulose 5-phosphate: step 6/6. In terms of biological role, catalyzes the conversion of 1-hydroxy-2-methyl-2-(E)-butenyl 4-diphosphate (HMBPP) into a mixture of isopentenyl diphosphate (IPP) and dimethylallyl diphosphate (DMAPP). Acts in the terminal step of the DOXP/MEP pathway for isoprenoid precursor biosynthesis. This Hahella chejuensis (strain KCTC 2396) protein is 4-hydroxy-3-methylbut-2-enyl diphosphate reductase.